We begin with the raw amino-acid sequence, 232 residues long: uncharacterized protein (232 aa).

The N-terminal stretch at Met-1–Ala-18 is a signal peptide. The tract at residues Ala-207 to Glu-232 is disordered.

It belongs to the PspA/Vipp/IM30 family.

This is an uncharacterized protein from Escherichia coli O6:H1 (strain CFT073 / ATCC 700928 / UPEC).